The primary structure comprises 306 residues: Triplex capsid protein 2 (306 aa).

This sequence belongs to the herpesviridae TRX2 protein family. As to quaternary structure, interacts with TRX1 and major capisd protein/MCP.

The protein localises to the virion. It localises to the host nucleus. Its function is as follows. Structural component of the T=16 icosahedral capsid. The capsid is composed of pentamers and hexamers of major capsid protein/MCP, which are linked together by heterotrimers called triplexes. These triplexes are formed by a single molecule of triplex protein 1/TRX1 and two copies of triplex protein 2/TRX2. Additionally, TRX1 is required for efficient transport of TRX2 to the nucleus, which is the site of capsid assembly. This Human cytomegalovirus (strain AD169) (HHV-5) protein is Triplex capsid protein 2.